A 129-amino-acid chain; its full sequence is D-ribose pyranase (129 aa).

Residue His-20 is the Proton donor of the active site. Substrate is bound by residues Asp-28, His-96, and 118-120; that span reads YAN.

Belongs to the RbsD / FucU family. RbsD subfamily. In terms of assembly, homodecamer.

The protein resides in the cytoplasm. It catalyses the reaction beta-D-ribopyranose = beta-D-ribofuranose. The protein operates within carbohydrate metabolism; D-ribose degradation; D-ribose 5-phosphate from beta-D-ribopyranose: step 1/2. Its function is as follows. Catalyzes the interconversion of beta-pyran and beta-furan forms of D-ribose. This chain is D-ribose pyranase, found in Shouchella clausii (strain KSM-K16) (Alkalihalobacillus clausii).